The following is a 272-amino-acid chain: Type II secretion system protein C (272 aa).

At 1–16 (MNISKLPPLSPSVIRR) the chain is on the cytoplasmic side. Residues 17–35 (ILFYLLMLLFCQQLAMIFW) form a helical membrane-spanning segment. Residues 36 to 272 (RVGLPDNSPV…DIYMEFGGDE (237 aa)) are Periplasmic-facing.

Belongs to the GSP C family.

It localises to the cell inner membrane. Its function is as follows. Involved in a type II secretion system (T2SS, formerly general secretion pathway, GSP) for the export of proteins. Required for the translocation of the multiple pectic enzymes. In Dickeya chrysanthemi (Pectobacterium chrysanthemi), this protein is Type II secretion system protein C (outC).